Reading from the N-terminus, the 93-residue chain is MMIDKLSGLDPVQNLRASCASEHVARAPAGDEITVSAEAQKKAELYLALEAVRSAPDVREYKIAAAEQKLADPAYLERALSHVVERFLEEQNL.

This is an uncharacterized protein from Treponema pallidum (strain Nichols).